The following is a 678-amino-acid chain: MAKQRGRKLLQKQNKDDFKHSLDQERHEEEVIQVPVDKAPAPISADGPNTFFGTLDTQELEYFKRAESTMAVDTFESADEKYQFINSVIEESKGKELKLATSQICSKLMERIILAADDQQLKAIFQGINGFFVNLSYNKYASHVVETLLVRSAALIEKELLTPVFEAELDGDEQVYASMENMFLFMLNELKPHMKMMINHQYASHVFRLLILVLSAKKLPKSTQSNSALRSKKSKIARKMVDLKDNADFDRTYRTPDSFKLELKGILVMLYKQFTNGIEPGTKHSEVNIACVTKFREYCVDKVASPVIQLIIQVEGIFDRDRSFWNLVFSNTEQNDPKEESFMEYLLSDSVGSHFLQAVIGFARTKQVERLYKLYMQDRIVKLAKRDTTGAFVIMSLLQNLGSKEVKSILDDLVPELSILLNSNLDFGSEIIEASIRQGDYKKTEIVEQLGKKYYPADSESKNILESCLQLASSTLGNTKDDWPTADERRRALFLEKLINFDDYFLEIAVESLLNLPEERIMQMCYHGVFSHVVEHVLQAKRVETVKRKLLLNILYKDAVNLACNAYGSHIMDKLWEFTAKLTLYKERIANLLLEEADKVKNSIYGRQVWKNWHLELYVRKRFDWRKKVKEQELEVFPDSKPLQPKQKESIPAKRSAPSNNQRPGSLNKKRNAEKHHT.

Residues 1–10 (MAKQRGRKLL) are compositionally biased toward basic residues. The disordered stretch occupies residues 1 to 31 (MAKQRGRKLLQKQNKDDFKHSLDQERHEEEV). The segment covering 13 to 30 (QNKDDFKHSLDQERHEEE) has biased composition (basic and acidic residues). Pumilio repeat units lie at residues 91-126 (ESKG…AIFQ), 127-162 (GING…ELLT), 189-224 (ELKP…KSTQ), 288-326 (NIAC…SFWN), 338-373 (KEES…RLYK), 375-411 (YMQD…SILD), 515-552 (NLPE…KLLL), and 553-591 (NILY…RIAN). Residues 636–678 (VFPDSKPLQPKQKESIPAKRSAPSNNQRPGSLNKKRNAEKHHT) form a disordered region. Over residues 668-678 (NKKRNAEKHHT) the composition is skewed to basic residues.

Belongs to the NOP9 family.

It is found in the nucleus. The protein localises to the nucleolus. RNA-binding nucleolar protein required for pre-rRNA processing. Involved in production of 18S rRNA and assembly of small ribosomal subunit. This is Nucleolar protein 9 (NOP9) from Eremothecium gossypii (strain ATCC 10895 / CBS 109.51 / FGSC 9923 / NRRL Y-1056) (Yeast).